The following is a 147-amino-acid chain: Holo-[acyl-carrier-protein] synthase (147 aa).

The Mg(2+) site is built by Asp7 and Glu60.

It belongs to the P-Pant transferase superfamily. AcpS family. Mg(2+) serves as cofactor.

The protein resides in the cytoplasm. It carries out the reaction apo-[ACP] + CoA = holo-[ACP] + adenosine 3',5'-bisphosphate + H(+). Its function is as follows. Transfers the 4'-phosphopantetheine moiety from coenzyme A to a Ser of acyl-carrier-protein. In Bifidobacterium animalis subsp. lactis (strain AD011), this protein is Holo-[acyl-carrier-protein] synthase.